A 686-amino-acid chain; its full sequence is Translation initiation factor IF-2 (686 aa).

A disordered region spans residues 54-105; it reads KPSVADEFEVEEKVVRSKKNSNKKKKKGKGNEDKRQENFAGRQQTQTVETPD. The segment covering 69–81 has biased composition (basic residues); sequence RSKKNSNKKKKKG. The tr-type G domain occupies 188–357; that stretch reads ERPAVVTIMG…LLVSEVEEYK (170 aa). The tract at residues 197-204 is G1; the sequence is GHVDHGKT. 197–204 contributes to the GTP binding site; sequence GHVDHGKT. The interval 222 to 226 is G2; it reads GITQH. The tract at residues 243–246 is G3; that stretch reads DTPG. Residues 243–247 and 297–300 contribute to the GTP site; these read DTPGH and NKMD. The interval 297 to 300 is G4; it reads NKMD. The interval 333–335 is G5; the sequence is SAI.

It belongs to the TRAFAC class translation factor GTPase superfamily. Classic translation factor GTPase family. IF-2 subfamily.

It is found in the cytoplasm. Its function is as follows. One of the essential components for the initiation of protein synthesis. Protects formylmethionyl-tRNA from spontaneous hydrolysis and promotes its binding to the 30S ribosomal subunits. Also involved in the hydrolysis of GTP during the formation of the 70S ribosomal complex. The protein is Translation initiation factor IF-2 of Bacillus cereus (strain 03BB102).